Here is a 209-residue protein sequence, read N- to C-terminus: Dual specificity protein phosphatase 22 (209 aa).

A Tyrosine-protein phosphatase domain is found at 4 to 144; the sequence is GMNKILPSLF…LEDFGKHDVY (141 aa). The Phosphocysteine intermediate role is filled by Cys88. The tract at residues 170 to 193 is disordered; that stretch reads DKHKQQEAAESQSATSSGRQWSSH. Positions 177–193 are enriched in low complexity; it reads AAESQSATSSGRQWSSH.

Belongs to the protein-tyrosine phosphatase family. Non-receptor class dual specificity subfamily.

It localises to the cytoplasm. The protein localises to the nucleus. The enzyme catalyses O-phospho-L-tyrosyl-[protein] + H2O = L-tyrosyl-[protein] + phosphate. It catalyses the reaction O-phospho-L-seryl-[protein] + H2O = L-seryl-[protein] + phosphate. The catalysed reaction is O-phospho-L-threonyl-[protein] + H2O = L-threonyl-[protein] + phosphate. In terms of biological role, activates the Jnk signaling pathway. Dephosphorylates and deactivates p38 and stress-activated protein kinase/c-Jun N-terminal kinase (SAPK/JNK). The protein is Dual specificity protein phosphatase 22 (dusp22) of Xenopus tropicalis (Western clawed frog).